The sequence spans 353 residues: 26S proteasome non-ATPase regulatory subunit 8 (353 aa).

Positions 1–25 are disordered; it reads MFIKGRAAKTPRGEPRRSSRGGRKL. The PCI domain occupies 165–334; sequence PSFERYMAQL…QQKPEDSTIP (170 aa). Residue Lys-300 forms a Glycyl lysine isopeptide (Lys-Gly) (interchain with G-Cter in SUMO2) linkage.

Belongs to the proteasome subunit S14 family. In terms of assembly, component of the 19S proteasome regulatory particle complex. The 26S proteasome consists of a 20S core particle (CP) and two 19S regulatory subunits (RP). The regulatory particle is made of a lid composed of 9 subunits including PSMD8, a base containing 6 ATPases and few additional components. Interacts with DDI2. Interacts with TASOR. As to expression, expressed in the Sertoli cells of the testis.

Its function is as follows. Component of the 26S proteasome, a multiprotein complex involved in the ATP-dependent degradation of ubiquitinated proteins. This complex plays a key role in the maintenance of protein homeostasis by removing misfolded or damaged proteins, which could impair cellular functions, and by removing proteins whose functions are no longer required. Therefore, the proteasome participates in numerous cellular processes, including cell cycle progression, apoptosis, or DNA damage repair. In Mus musculus (Mouse), this protein is 26S proteasome non-ATPase regulatory subunit 8 (Psmd8).